Here is a 509-residue protein sequence, read N- to C-terminus: Putative thymidine phosphorylase (509 aa).

This sequence belongs to the thymidine/pyrimidine-nucleoside phosphorylase family. Type 2 subfamily.

The catalysed reaction is thymidine + phosphate = 2-deoxy-alpha-D-ribose 1-phosphate + thymine. The sequence is that of Putative thymidine phosphorylase from Chelativorans sp. (strain BNC1).